The sequence spans 134 residues: Cystatin-1 (134 aa).

The first 17 residues, 1-17, serve as a signal peptide directing secretion; that stretch reads MKAIYLILTVLCGFSAS. In terms of domain architecture, Cystatin spans 21–116; that stretch reads GGWRDKDVDD…CTAIIWTRSW (96 aa). A Secondary area of contact motif is present at residues 65–69; it reads QVVSG. Intrachain disulfides connect Cys-83/Cys-96 and Cys-107/Cys-127.

It belongs to the cystatin family. As to expression, expressed by the venom gland.

It localises to the secreted. In terms of biological role, inhibits various C1 cysteine proteases. This protein has no toxic activity and its function in the venom is unknown. It may play a role as a housekeeping or regulatory protein. The protein is Cystatin-1 of Chilobrachys guangxiensis (Chinese earth tiger tarantula).